A 358-amino-acid polypeptide reads, in one-letter code: Protein ocs (358 aa).

This sequence belongs to the lysopine/nopaline/octopine/opine/vitopine dehydrogenases family.

The catalysed reaction is D-octopine + NAD(+) + H2O = L-arginine + pyruvate + NADH + H(+). The enzyme catalyses D-lysopine + NADP(+) + H2O = L-lysine + pyruvate + NADPH + H(+). Its function is as follows. Reductive condensation of pyruvate and arginine, lysine, histidine, or octopine to form octopine, lysopine, histopine, or octopinic acid, respectively. NADPH is the preferred cofactor, but NADH can also be used. This Agrobacterium vitis (Rhizobium vitis) protein is Protein ocs (ocs).